A 29-amino-acid polypeptide reads, in one-letter code: Photosystem I reaction center subunit XII (29 aa).

The helical transmembrane segment at 7-24 (FVALLLALVPAVLAYRLG) threads the bilayer.

This sequence belongs to the PsaM family.

The protein localises to the cellular thylakoid membrane. The chain is Photosystem I reaction center subunit XII from Synechococcus sp. (strain ATCC 27144 / PCC 6301 / SAUG 1402/1) (Anacystis nidulans).